Here is a 105-residue protein sequence, read N- to C-terminus: UPF0145 protein lpg0197 (105 aa).

Belongs to the UPF0145 family.

In Legionella pneumophila subsp. pneumophila (strain Philadelphia 1 / ATCC 33152 / DSM 7513), this protein is UPF0145 protein lpg0197.